Consider the following 238-residue polypeptide: Ribonuclease PH (238 aa).

Residues arginine 86 and 124-126 contribute to the phosphate site; that span reads GTR.

It belongs to the RNase PH family. As to quaternary structure, homohexameric ring arranged as a trimer of dimers.

The enzyme catalyses tRNA(n+1) + phosphate = tRNA(n) + a ribonucleoside 5'-diphosphate. In terms of biological role, phosphorolytic 3'-5' exoribonuclease that plays an important role in tRNA 3'-end maturation. Removes nucleotide residues following the 3'-CCA terminus of tRNAs; can also add nucleotides to the ends of RNA molecules by using nucleoside diphosphates as substrates, but this may not be physiologically important. Probably plays a role in initiation of 16S rRNA degradation (leading to ribosome degradation) during starvation. The sequence is that of Ribonuclease PH from Enterobacter sp. (strain 638).